A 103-amino-acid chain; its full sequence is UPF0473 protein SSA_2239 (103 aa).

Belongs to the UPF0473 family.

The protein is UPF0473 protein SSA_2239 of Streptococcus sanguinis (strain SK36).